A 508-amino-acid chain; its full sequence is Mu-like prophage FluMu protein gp28 (508 aa).

The protein to phage Mu protein gp28.

The protein is Mu-like prophage FluMu protein gp28 of Haemophilus influenzae (strain ATCC 51907 / DSM 11121 / KW20 / Rd).